The primary structure comprises 471 residues: Ribulose bisphosphate carboxylase large chain 2 (471 aa).

N116 and T166 together coordinate substrate. The Proton acceptor role is filled by K168. K170 contributes to the substrate binding site. Mg(2+) contacts are provided by K194, D196, and E197. The residue at position 194 (K194) is an N6-carboxylysine. The active-site Proton acceptor is the H287. Substrate contacts are provided by R288, H320, and S372.

This sequence belongs to the RuBisCO large chain family. Type I subfamily. Heterohexadecamer of 8 large chains and 8 small chains. Mg(2+) serves as cofactor.

The protein resides in the carboxysome. It carries out the reaction 2 (2R)-3-phosphoglycerate + 2 H(+) = D-ribulose 1,5-bisphosphate + CO2 + H2O. The enzyme catalyses D-ribulose 1,5-bisphosphate + O2 = 2-phosphoglycolate + (2R)-3-phosphoglycerate + 2 H(+). In terms of biological role, ruBisCO catalyzes two reactions: the carboxylation of D-ribulose 1,5-bisphosphate, the primary event in carbon dioxide fixation, as well as the oxidative fragmentation of the pentose substrate. Both reactions occur simultaneously and in competition at the same active site. In Hydrogenovibrio marinus, this protein is Ribulose bisphosphate carboxylase large chain 2.